The sequence spans 123 residues: ATP synthase epsilon chain (123 aa).

Belongs to the ATPase epsilon chain family. F-type ATPases have 2 components, CF(1) - the catalytic core - and CF(0) - the membrane proton channel. CF(1) has five subunits: alpha(3), beta(3), gamma(1), delta(1), epsilon(1). CF(0) has three main subunits: a, b and c.

Its subcellular location is the cell inner membrane. Produces ATP from ADP in the presence of a proton gradient across the membrane. The polypeptide is ATP synthase epsilon chain (Helicobacter pylori (strain P12)).